Consider the following 342-residue polypeptide: Phosphate acyltransferase (342 aa).

Belongs to the PlsX family. In terms of assembly, homodimer. Probably interacts with PlsY.

The protein resides in the cytoplasm. It carries out the reaction a fatty acyl-[ACP] + phosphate = an acyl phosphate + holo-[ACP]. Its pathway is lipid metabolism; phospholipid metabolism. In terms of biological role, catalyzes the reversible formation of acyl-phosphate (acyl-PO(4)) from acyl-[acyl-carrier-protein] (acyl-ACP). This enzyme utilizes acyl-ACP as fatty acyl donor, but not acyl-CoA. The polypeptide is Phosphate acyltransferase (Shewanella loihica (strain ATCC BAA-1088 / PV-4)).